A 245-amino-acid chain; its full sequence is tRNA pseudouridine synthase A (245 aa).

The active-site Nucleophile is the Asp52. Tyr112 lines the substrate pocket.

This sequence belongs to the tRNA pseudouridine synthase TruA family. In terms of assembly, homodimer.

The catalysed reaction is uridine(38/39/40) in tRNA = pseudouridine(38/39/40) in tRNA. Functionally, formation of pseudouridine at positions 38, 39 and 40 in the anticodon stem and loop of transfer RNAs. This is tRNA pseudouridine synthase A from Dictyoglomus turgidum (strain DSM 6724 / Z-1310).